We begin with the raw amino-acid sequence, 173 residues long: Shikimate kinase 1 (173 aa).

An ATP-binding site is contributed by Gly14–Thr19. Position 18 (Ser18) interacts with Mg(2+). The substrate site is built by Asp36, Arg60, and Gly82. Arg120 is an ATP binding site. Position 140 (Arg140) interacts with substrate. Position 157 (Gln157) interacts with ATP.

The protein belongs to the shikimate kinase family. Monomer. Mg(2+) serves as cofactor.

It localises to the cytoplasm. It catalyses the reaction shikimate + ATP = 3-phosphoshikimate + ADP + H(+). Its pathway is metabolic intermediate biosynthesis; chorismate biosynthesis; chorismate from D-erythrose 4-phosphate and phosphoenolpyruvate: step 5/7. Catalyzes the specific phosphorylation of the 3-hydroxyl group of shikimic acid using ATP as a cosubstrate. The chain is Shikimate kinase 1 from Yersinia pseudotuberculosis serotype O:1b (strain IP 31758).